The chain runs to 480 residues: ATP synthase subunit beta (480 aa).

Gly154–Thr161 contributes to the ATP binding site.

This sequence belongs to the ATPase alpha/beta chains family. In terms of assembly, F-type ATPases have 2 components, CF(1) - the catalytic core - and CF(0) - the membrane proton channel. CF(1) has five subunits: alpha(3), beta(3), gamma(1), delta(1), epsilon(1). CF(0) has four main subunits: a(1), b(1), b'(1) and c(9-12).

It localises to the cell inner membrane. It catalyses the reaction ATP + H2O + 4 H(+)(in) = ADP + phosphate + 5 H(+)(out). Functionally, produces ATP from ADP in the presence of a proton gradient across the membrane. The catalytic sites are hosted primarily by the beta subunits. This Bradyrhizobium sp. (strain ORS 278) protein is ATP synthase subunit beta.